A 657-amino-acid chain; its full sequence is UvrABC system protein B (657 aa).

The Helicase ATP-binding domain maps to 25-163; that stretch reads ASIKNGNKYQ…QGMVLFLEIN (139 aa). 38–45 is an ATP binding site; that stretch reads GVTGSGKT. Positions 91-114 match the Beta-hairpin motif; the sequence is YYDYYQPEAYIPRQDLFIEKDSSI. Positions 130–133 match the DEAD box motif; sequence LSFD. The 167-residue stretch at 433–599 folds into the Helicase C-terminal domain; that stretch reads QVEILYDMAK…SVSRNVEESL (167 aa). Residues 622-657 enclose the UVR domain; the sequence is AKIVKDLRKQMMEAADKLEFEKAAALRDEIKKMRKL.

This sequence belongs to the UvrB family. As to quaternary structure, forms a heterotetramer with UvrA during the search for lesions. Interacts with UvrC in an incision complex.

The protein localises to the cytoplasm. Functionally, the UvrABC repair system catalyzes the recognition and processing of DNA lesions. A damage recognition complex composed of 2 UvrA and 2 UvrB subunits scans DNA for abnormalities. Upon binding of the UvrA(2)B(2) complex to a putative damaged site, the DNA wraps around one UvrB monomer. DNA wrap is dependent on ATP binding by UvrB and probably causes local melting of the DNA helix, facilitating insertion of UvrB beta-hairpin between the DNA strands. Then UvrB probes one DNA strand for the presence of a lesion. If a lesion is found the UvrA subunits dissociate and the UvrB-DNA preincision complex is formed. This complex is subsequently bound by UvrC and the second UvrB is released. If no lesion is found, the DNA wraps around the other UvrB subunit that will check the other stand for damage. This Campylobacter hominis (strain ATCC BAA-381 / DSM 21671 / CCUG 45161 / LMG 19568 / NCTC 13146 / CH001A) protein is UvrABC system protein B.